Reading from the N-terminus, the 225-residue chain is UPF0758 protein Ping_0056 (225 aa).

One can recognise an MPN domain in the interval 103–225 (ALTSAAQTKA…CTSFAENGWI (123 aa)). Zn(2+) contacts are provided by H174, H176, and D187. The JAMM motif signature appears at 174–187 (HNHPSGDPSASEAD).

It belongs to the UPF0758 family.

The chain is UPF0758 protein Ping_0056 from Psychromonas ingrahamii (strain DSM 17664 / CCUG 51855 / 37).